The primary structure comprises 459 residues: Interleukin-7 receptor subunit alpha (459 aa).

The N-terminal stretch at 1-20 is a signal peptide; the sequence is MMALGRAFAIVFCLIQAVSG. Topologically, residues 21-239 are extracellular; the sequence is ESGNAQDGDL…PEPKNQGGWD (219 aa). Cysteine 42 and cysteine 57 are disulfide-bonded. Asparagine 60 is a glycosylation site (N-linked (GlcNAc...) asparagine). 2 cysteine pairs are disulfide-bonded: cysteine 74–cysteine 82 and cysteine 108–cysteine 118. Asparagine 115 and asparagine 177 each carry an N-linked (GlcNAc...) asparagine glycan. Positions 131 to 232 constitute a Fibronectin type-III domain; sequence APSDLKVVYR…PSSTFETPEP (102 aa). A WSXWS motif motif is present at residues 218 to 222; that stretch reads WSEWS. The helical transmembrane segment at 240-264 threads the bilayer; sequence PVLPSVTILSLFSVFLLVILAHVLW. The Cytoplasmic segment spans residues 265–459; that stretch reads KKRIKPVVWP…VTMSSFYQNK (195 aa). Positions 272-280 match the Box 1 motif motif; it reads VWPSLPDHK. Position 282 is a phosphothreonine; by PKC (threonine 282). Disordered stretches follow at residues 337-365 and 378-413; these read TQGH…RRES and NAPP…NTNV. Over residues 347–357 the composition is skewed to polar residues; sequence ANRSPETSVSP. Basic and acidic residues predominate over residues 388–397; the sequence is PDYRDGDRNR.

It belongs to the type I cytokine receptor family. Type 4 subfamily. In terms of assembly, the IL7 receptor is a heterodimer of IL7R and IL2RG. The TSLP receptor is a heterodimer of CRLF2 and IL7R. Interacts with CD53. Post-translationally, N-glycosylated IL-7Ralpha binds IL7 300-fold more tightly than the unglycosylated form. In terms of processing, ubiquitinated by MARCHF8; leading to lysosomal degradation. In terms of tissue distribution, spleen, thymus and fetal liver.

It localises to the membrane. Receptor for interleukin-7. Also acts as a receptor for thymic stromal lymphopoietin (TSLP). The protein is Interleukin-7 receptor subunit alpha (Il7r) of Mus musculus (Mouse).